The primary structure comprises 299 residues: Taste receptor type 2 member 4 (299 aa).

The Extracellular segment spans residues 1–9 (MLQLFYFSA). Residues 10-30 (IIASVILNFVGIIMNLFIMVV) form a helical membrane-spanning segment. Residues 31–46 (NCKTWVKSHRISSSDR) are Cytoplasmic-facing. Residues 47-67 (ILFSLGITRFLMLGLFLVNTI) traverse the membrane as a helical segment. At 68 to 81 (FFVSSNTERSVYLS) the chain is on the extracellular side. A helical membrane pass occupies residues 82-102 (AFFVLCFMFXDSSSLWFVTLL). Residues 103–131 (NILYCVKITNFQHSVFLLLKQNISPKIPR) lie on the Cytoplasmic side of the membrane. The chain crosses the membrane as a helical span at residues 132-152 (LLLACVLISAFTTCLYITLSQ). Over 153–172 (ASPFPELVTKRNNTSFNTHE) the chain is Extracellular. N-linked (GlcNAc...) asparagine glycans are attached at residues Asn-164 and Asn-165. The helical transmembrane segment at 173 to 193 (GILSLVVSLVLSSSLQFIINV) threads the bilayer. The Cytoplasmic portion of the chain corresponds to 194-230 (TSASLLIHSLRRHIQKMQKNATGFWNPQTEAHVGAMK). The chain crosses the membrane as a helical span at residues 231–251 (LMIYFLILYIPYSVATLVQYL). The Extracellular segment spans residues 252-262 (PFYVGMDMGTK). The helical transmembrane segment at 263-283 (AICLIFATLYSPGHSVLIIIT) threads the bilayer. Residues 284–299 (HPKLKTTAKKILCFKK) lie on the Cytoplasmic side of the membrane.

Belongs to the G-protein coupled receptor T2R family.

Its subcellular location is the membrane. The protein resides in the cell projection. It is found in the cilium membrane. Its function is as follows. Gustducin-coupled receptor implicated in the perception of bitter compounds in the oral cavity and the gastrointestinal tract. Signals through PLCB2 and the calcium-regulated cation channel TRPM5. In airway epithelial cells, binding of denatonium increases the intracellular calcium ion concentration and stimulates ciliary beat frequency. The sequence is that of Taste receptor type 2 member 4 (TAS2R4) from Pongo pygmaeus (Bornean orangutan).